Reading from the N-terminus, the 29-residue chain is Cytochrome b6-f complex subunit 8 (29 aa).

The helical transmembrane segment at 3–23 threads the bilayer; that stretch reads IVSLAWASLMVVFTFSLSLVV.

This sequence belongs to the PetN family. The 4 large subunits of the cytochrome b6-f complex are cytochrome b6, subunit IV (17 kDa polypeptide, PetD), cytochrome f and the Rieske protein, while the 4 small subunits are PetG, PetL, PetM and PetN. The complex functions as a dimer.

It is found in the plastid. The protein resides in the chloroplast thylakoid membrane. Functionally, component of the cytochrome b6-f complex, which mediates electron transfer between photosystem II (PSII) and photosystem I (PSI), cyclic electron flow around PSI, and state transitions. This chain is Cytochrome b6-f complex subunit 8, found in Coffea arabica (Arabian coffee).